Here is a 943-residue protein sequence, read N- to C-terminus: Isoleucine--tRNA ligase (943 aa).

A 'HIGH' region motif is present at residues 58–68 (PYANGSIHIGH). E567 lines the L-isoleucyl-5'-AMP pocket. Positions 608-612 (KMSKS) match the 'KMSKS' region motif. K611 is a binding site for ATP. 4 residues coordinate Zn(2+): C906, C909, C926, and C929.

This sequence belongs to the class-I aminoacyl-tRNA synthetase family. IleS type 1 subfamily. As to quaternary structure, monomer. It depends on Zn(2+) as a cofactor.

The protein resides in the cytoplasm. It catalyses the reaction tRNA(Ile) + L-isoleucine + ATP = L-isoleucyl-tRNA(Ile) + AMP + diphosphate. Functionally, catalyzes the attachment of isoleucine to tRNA(Ile). As IleRS can inadvertently accommodate and process structurally similar amino acids such as valine, to avoid such errors it has two additional distinct tRNA(Ile)-dependent editing activities. One activity is designated as 'pretransfer' editing and involves the hydrolysis of activated Val-AMP. The other activity is designated 'posttransfer' editing and involves deacylation of mischarged Val-tRNA(Ile). This is Isoleucine--tRNA ligase from Pseudomonas aeruginosa (strain ATCC 15692 / DSM 22644 / CIP 104116 / JCM 14847 / LMG 12228 / 1C / PRS 101 / PAO1).